The following is a 393-amino-acid chain: Ceramide synthase 4 (393 aa).

At 1–31 the chain is on the lumenal side; that stretch reads MWSSLNDWLWNERLWLPANISWAQLEDHDGL. Residue Asn-19 is glycosylated (N-linked (GlcNAc...) asparagine). The chain crosses the membrane as a helical span at residues 32–52; that stretch reads VFPHPQDTLMAVPLALALVVV. A homeobox-like region spans residues 67 to 128; sequence WLGVRNQIRR…RRRRNQDRPC (62 aa). The TLC domain maps to 131 to 332; that stretch reads KKFCESSWKF…ILCMIYSFIK (202 aa). Transmembrane regions (helical) follow at residues 140 to 160, 179 to 199, 209 to 229, and 260 to 280; these read FVFY…ESWL, LYHW…TLPF, QVIH…LNLL, and MCDT…LVLF. The Last loop motif motif lies at 291 to 301; the sequence is ESIGNFSPFFG. The helical transmembrane segment at 304 to 324 threads the bilayer; the sequence is FLNILLVILQLLHVFWSWLIL. Residues 325 to 393 lie on the Cytoplasmic side of the membrane; it reads CMIYSFIKKG…RMVNRHTPAT (69 aa). A phosphoserine mark is found at Ser-342, Ser-349, and Ser-350. Residues 346-356 show a composition bias toward acidic residues; sequence ELDSSDGEAAE. Residues 346 to 393 form a disordered region; sequence ELDSSDGEAAEECPQMKNGAAQRPGAAPTDGPRSRAAGRMVNRHTPAT.

Post-translationally, phosphorylated at the C-terminus by CK2.

Its subcellular location is the endoplasmic reticulum membrane. The enzyme catalyses sphinganine + octadecanoyl-CoA = N-(octadecanoyl)-sphinganine + CoA + H(+). It catalyses the reaction eicosanoyl-CoA + sphinganine = N-eicosanoylsphinganine + CoA + H(+). It carries out the reaction docosanoyl-CoA + sphinganine = N-docosanoylsphinganine + CoA + H(+). The catalysed reaction is tetracosanoyl-CoA + sphinganine = N-tetracosanoylsphinganine + CoA + H(+). The enzyme catalyses hexacosanoyl-CoA + sphinganine = N-hexacosanoylsphinganine + CoA + H(+). It catalyses the reaction a fatty acyl-CoA + sphing-4-enine = an N-acylsphing-4-enine + CoA + H(+). It carries out the reaction sphing-4-enine + octadecanoyl-CoA = N-octadecanoylsphing-4-enine + CoA + H(+). The catalysed reaction is hexadecasphinganine + octadecanoyl-CoA = N-octadecanoylhexadecasphinganine + CoA + H(+). It participates in lipid metabolism; sphingolipid metabolism. Functionally, ceramide synthase that catalyzes formation of ceramide from sphinganine and acyl-CoA substrates, with high selectivity toward long and very-long chains (C18:0-C22:0) as acyl donor. The sequence is that of Ceramide synthase 4 from Bos taurus (Bovine).